Here is a 498-residue protein sequence, read N- to C-terminus: Ribose import ATP-binding protein RbsA (498 aa).

2 ABC transporter domains span residues 2-237 (LALQ…VGRD) and 247-491 (VTPG…TGQQ). 34-41 (GENGAGKS) provides a ligand contact to ATP.

Belongs to the ABC transporter superfamily. Ribose importer (TC 3.A.1.2.1) family. The complex is composed of an ATP-binding protein (RbsA), two transmembrane proteins (RbsC) and a solute-binding protein (RbsB).

It localises to the cell membrane. The catalysed reaction is D-ribose(out) + ATP + H2O = D-ribose(in) + ADP + phosphate + H(+). Part of the ABC transporter complex RbsABC involved in ribose import. Responsible for energy coupling to the transport system. The chain is Ribose import ATP-binding protein RbsA from Deinococcus geothermalis (strain DSM 11300 / CIP 105573 / AG-3a).